We begin with the raw amino-acid sequence, 143 residues long: Large ribosomal subunit protein uL11 (143 aa).

This sequence belongs to the universal ribosomal protein uL11 family. Part of the ribosomal stalk of the 50S ribosomal subunit. Interacts with L10 and the large rRNA to form the base of the stalk. L10 forms an elongated spine to which L12 dimers bind in a sequential fashion forming a multimeric L10(L12)X complex. One or more lysine residues are methylated.

Its function is as follows. Forms part of the ribosomal stalk which helps the ribosome interact with GTP-bound translation factors. This Polynucleobacter asymbioticus (strain DSM 18221 / CIP 109841 / QLW-P1DMWA-1) (Polynucleobacter necessarius subsp. asymbioticus) protein is Large ribosomal subunit protein uL11.